We begin with the raw amino-acid sequence, 330 residues long: tRNA U34 carboxymethyltransferase (330 aa).

Carboxy-S-adenosyl-L-methionine contacts are provided by residues Lys91, Trp105, Lys110, Gly130, 152–154 (DPS), 181–182 (IE), Met196, Tyr200, and Arg315.

This sequence belongs to the class I-like SAM-binding methyltransferase superfamily. CmoB family. Homotetramer.

The enzyme catalyses carboxy-S-adenosyl-L-methionine + 5-hydroxyuridine(34) in tRNA = 5-carboxymethoxyuridine(34) in tRNA + S-adenosyl-L-homocysteine + H(+). In terms of biological role, catalyzes carboxymethyl transfer from carboxy-S-adenosyl-L-methionine (Cx-SAM) to 5-hydroxyuridine (ho5U) to form 5-carboxymethoxyuridine (cmo5U) at position 34 in tRNAs. The chain is tRNA U34 carboxymethyltransferase from Shewanella sediminis (strain HAW-EB3).